A 234-amino-acid chain; its full sequence is Large ribosomal subunit protein uL1 (234 aa).

It belongs to the universal ribosomal protein uL1 family. As to quaternary structure, part of the 50S ribosomal subunit.

Binds directly to 23S rRNA. The L1 stalk is quite mobile in the ribosome, and is involved in E site tRNA release. In terms of biological role, protein L1 is also a translational repressor protein, it controls the translation of the L11 operon by binding to its mRNA. This is Large ribosomal subunit protein uL1 from Tolumonas auensis (strain DSM 9187 / NBRC 110442 / TA 4).